Reading from the N-terminus, the 529-residue chain is VIN3-like protein 3 (529 aa).

The Nuclear localization signal motif lies at Pro97–Leu104. A PHD-type zinc finger spans residues Arg137 to Thr207. A Nuclear localization signal motif is present at residues Leu214–Ala221. Positions Gly312–Asp411 constitute a Fibronectin type-III domain. Residues Met421 to Asp529 form a VIN3-Interacting Domain (VID) region.

As to quaternary structure, interacts with VIN3.

The protein localises to the nucleus. Involved in both the vernalization and photoperiod pathways by regulating gene expression. The polypeptide is VIN3-like protein 3 (VIL3) (Arabidopsis thaliana (Mouse-ear cress)).